The following is a 173-amino-acid chain: Ribosome maturation factor RimM (173 aa).

One can recognise a PRC barrel domain in the interval 97–170 (EHEYYYHEII…RIRVHIMEGL (74 aa)).

Belongs to the RimM family. As to quaternary structure, binds ribosomal protein uS19.

It localises to the cytoplasm. Functionally, an accessory protein needed during the final step in the assembly of 30S ribosomal subunit, possibly for assembly of the head region. Essential for efficient processing of 16S rRNA. May be needed both before and after RbfA during the maturation of 16S rRNA. It has affinity for free ribosomal 30S subunits but not for 70S ribosomes. This is Ribosome maturation factor RimM from Shouchella clausii (strain KSM-K16) (Alkalihalobacillus clausii).